The chain runs to 1234 residues: ATP-dependent helicase/nuclease subunit A (1234 aa).

The region spanning 2-475 (TQFTTSQQAA…IILAENFRST (474 aa)) is the UvrD-like helicase ATP-binding domain. 23 to 30 (ASAGSGKT) is an ATP binding site. The UvrD-like helicase C-terminal domain occupies 507–806 (YGALDYGDAH…KLMTIHKSKG (300 aa)).

This sequence belongs to the helicase family. AddA subfamily. In terms of assembly, heterodimer of AddA and AddB/RexB. Mg(2+) is required as a cofactor.

The catalysed reaction is Couples ATP hydrolysis with the unwinding of duplex DNA by translocating in the 3'-5' direction.. It catalyses the reaction ATP + H2O = ADP + phosphate + H(+). The heterodimer acts as both an ATP-dependent DNA helicase and an ATP-dependent, dual-direction single-stranded exonuclease. Recognizes the chi site generating a DNA molecule suitable for the initiation of homologous recombination. The AddA nuclease domain is required for chi fragment generation; this subunit has the helicase and 3' -&gt; 5' nuclease activities. The protein is ATP-dependent helicase/nuclease subunit A of Lacticaseibacillus paracasei (strain ATCC 334 / BCRC 17002 / CCUG 31169 / CIP 107868 / KCTC 3260 / NRRL B-441) (Lactobacillus paracasei).